Consider the following 325-residue polypeptide: Tagatose 1,6-diphosphate aldolase 1 (325 aa).

The protein belongs to the aldolase LacD family.

The catalysed reaction is D-tagatofuranose 1,6-bisphosphate = D-glyceraldehyde 3-phosphate + dihydroxyacetone phosphate. It functions in the pathway carbohydrate metabolism; D-tagatose 6-phosphate degradation; D-glyceraldehyde 3-phosphate and glycerone phosphate from D-tagatose 6-phosphate: step 2/2. This is Tagatose 1,6-diphosphate aldolase 1 (lacD1) from Streptococcus pyogenes serotype M1.